The sequence spans 312 residues: Coproporphyrin III ferrochelatase (312 aa).

Residues Y13, R30, 46-47 (RY), S54, and Y125 contribute to the Fe-coproporphyrin III site. Residues H182 and E263 each coordinate Fe(2+).

The protein belongs to the ferrochelatase family.

It is found in the cytoplasm. It catalyses the reaction Fe-coproporphyrin III + 2 H(+) = coproporphyrin III + Fe(2+). Its pathway is porphyrin-containing compound metabolism; protoheme biosynthesis. Functionally, involved in coproporphyrin-dependent heme b biosynthesis. Catalyzes the insertion of ferrous iron into coproporphyrin III to form Fe-coproporphyrin III. The polypeptide is Coproporphyrin III ferrochelatase (Oceanobacillus iheyensis (strain DSM 14371 / CIP 107618 / JCM 11309 / KCTC 3954 / HTE831)).